Reading from the N-terminus, the 467-residue chain is Transcription factor bHLH3 (467 aa).

A bHLH domain is found at 316–365 (EEALNHVEAERQRREKLNQRFYALRAVVPNISKMDKASLLADAITYITDM).

In terms of assembly, homodimer.

It is found in the nucleus. This chain is Transcription factor bHLH3 (BHLH3), found in Arabidopsis thaliana (Mouse-ear cress).